Consider the following 218-residue polypeptide: Large ribosomal subunit protein uL3 (218 aa).

It belongs to the universal ribosomal protein uL3 family. Part of the 50S ribosomal subunit. Forms a cluster with proteins L14 and L19.

In terms of biological role, one of the primary rRNA binding proteins, it binds directly near the 3'-end of the 23S rRNA, where it nucleates assembly of the 50S subunit. The polypeptide is Large ribosomal subunit protein uL3 (Corynebacterium efficiens (strain DSM 44549 / YS-314 / AJ 12310 / JCM 11189 / NBRC 100395)).